A 264-amino-acid polypeptide reads, in one-letter code: Phosphatidylglycerol--prolipoprotein diacylglyceryl transferase (264 aa).

The next 4 helical transmembrane spans lie at 17 to 37, 57 to 77, 89 to 109, and 118 to 138; these read LAIH…YLLG, LIFY…VLFY, IAFL…VILV, and GVSF…GLGA. R140 provides a ligand contact to a 1,2-diacyl-sn-glycero-3-phospho-(1'-sn-glycerol). The next 3 membrane-spanning stretches (helical) occupy residues 173–193, 201–221, and 237–257; these read PSQL…LWWF, GQVS…VEFT, and MGQW…VLTA.

This sequence belongs to the Lgt family.

The protein localises to the cell inner membrane. It carries out the reaction L-cysteinyl-[prolipoprotein] + a 1,2-diacyl-sn-glycero-3-phospho-(1'-sn-glycerol) = an S-1,2-diacyl-sn-glyceryl-L-cysteinyl-[prolipoprotein] + sn-glycerol 1-phosphate + H(+). It functions in the pathway protein modification; lipoprotein biosynthesis (diacylglyceryl transfer). Functionally, catalyzes the transfer of the diacylglyceryl group from phosphatidylglycerol to the sulfhydryl group of the N-terminal cysteine of a prolipoprotein, the first step in the formation of mature lipoproteins. The polypeptide is Phosphatidylglycerol--prolipoprotein diacylglyceryl transferase (Bordetella avium (strain 197N)).